The sequence spans 571 residues: Putative pyruvate decarboxylase C13A11.06 (571 aa).

D29 and H118 together coordinate pyruvate. Residues T395 and 418–420 (GSI) contribute to the thiamine diphosphate site. D450 provides a ligand contact to Mg(2+). Residues 451–452 (GS) and 477–482 (NDGYTI) each bind thiamine diphosphate. Mg(2+) contacts are provided by N477 and G479. E483 is a binding site for pyruvate.

The protein belongs to the TPP enzyme family. Homotetramer. Mg(2+) serves as cofactor. It depends on thiamine diphosphate as a cofactor.

The catalysed reaction is a 2-oxocarboxylate + H(+) = an aldehyde + CO2. It carries out the reaction pyruvate + H(+) = acetaldehyde + CO2. The protein is Putative pyruvate decarboxylase C13A11.06 of Schizosaccharomyces pombe (strain 972 / ATCC 24843) (Fission yeast).